The chain runs to 979 residues: Peptidyl-glycine alpha-amidating monooxygenase (979 aa).

The N-terminal stretch at 1–24 (MAGRARSRLLLLLGLLALQSSCLA) is a signal peptide. The tract at residues 1-497 (MAGRARSRLL…EGPWEPELAG (497 aa)) is peptidylglycine alpha-hydroxylating monooxygenase. Residues 25 to 34 (FRSPLSVFKR) constitute a propeptide that is removed on maturation. Residues 35–869 (FKETTRSFSN…KKLIKDPGSG (835 aa)) lie on the Intragranular side of the membrane. 5 cysteine pairs are disulfide-bonded: Cys46–Cys185, Cys80–Cys125, Cys113–Cys130, Cys226–Cys333, and Cys292–Cys314. The Cu(2+) site is built by His106 and His107. Residues His171, His241, His243, and Met313 each coordinate Cu(2+). The peptidyl-alpha-hydroxyglycine alpha-amidating lyase stretch occupies residues 498 to 823 (DFHVEEALEW…SRLEVEHRSV (326 aa)). 4 NHL repeats span residues 501–544 (VEEA…NSFD), 570–611 (AEIL…LEPR), 620–665 (LGRS…FSPS), and 673–717 (GEES…FKTD). Position 520 (Val520) interacts with Ca(2+). Arg533 is a binding site for a protein. His585 contacts Zn(2+). Leu587 is a Ca(2+) binding site. The cysteines at positions 634 and 655 are disulfide-linked. An a protein-binding site is contributed by Tyr654. His690 is a Zn(2+) binding site. Cys702 and Cys713 form a disulfide bridge. Arg706 serves as a coordination point for a protein. Asn765 is a glycosylation site (N-linked (GlcNAc...) asparagine). The stretch at 769–812 (GEIIDVFKPVRKHFDMPHDIVASEDGTVYIGDAHTNTVWKFTLT) is one NHL 5 repeat. Residue His786 coordinates Zn(2+). Asp787 serves as a coordination point for Ca(2+). The chain crosses the membrane as a helical span at residues 870 to 893 (VPVVLITTLLVIPVVVLLAIAMFI). The Cytoplasmic segment spans residues 894–979 (RWKKSRAFGD…APLPTPAPSS (86 aa)). Phosphoserine occurs at positions 924, 925, 935, and 948. Residues 931 to 948 (NFFASRKGYSRKGFDRVS) form an interaction with RASSF9 region. The disordered stretch occupies residues 943–979 (GFDRVSTEGSDQEKDEDDGSESEEEYSAPLPTPAPSS). Phosphothreonine is present on Thr949. Position 952 is a phosphoserine; by UHMK1 (Ser952). Over residues 955-968 (EKDEDDGSESEEEY) the composition is skewed to acidic residues. A Phosphoserine modification is found at Ser964.

It in the C-terminal section; belongs to the peptidyl-alpha-hydroxyglycine alpha-amidating lyase family. In the N-terminal section; belongs to the copper type II ascorbate-dependent monooxygenase family. Monomer. Interacts with RASSF9. Zn(2+) is required as a cofactor. Cu(2+) serves as cofactor.

It is found in the cytoplasmic vesicle. The protein resides in the secretory vesicle membrane. The catalysed reaction is a [peptide]-C-terminal glycine + 2 L-ascorbate + O2 = a [peptide]-C-terminal (2S)-2-hydroxyglycine + 2 monodehydro-L-ascorbate radical + H2O. It catalyses the reaction a [peptide]-C-terminal (2S)-2-hydroxyglycine = a [peptide]-C-terminal amide + glyoxylate. The enzyme catalyses N-dodecanoylglycine + 2 L-ascorbate + O2 = N-dodecanoyl-(2S)-hydroxyglycine + 2 monodehydro-L-ascorbate radical + H2O. It carries out the reaction N-dodecanoyl-(2S)-hydroxyglycine = dodecanamide + glyoxylate. The catalysed reaction is N-(9Z,12Z,15Z)-octadecatrienoylglycine + 2 L-ascorbate + O2 = N-(9Z,12Z,15Z)-octadecatrienoyl-(2S)-hydroxyglycine + 2 monodehydro-L-ascorbate radical + H2O. It catalyses the reaction N-(9Z,12Z,15Z)-octadecatrienoyl-(2S)-hydroxyglycine = (9Z,12Z,15Z)-octadecatrienamide + glyoxylate. The enzyme catalyses N-(9Z-octadecenoyl)glycine + 2 L-ascorbate + O2 = N-(9Z-octadecenoyl)-(2S)-hydroxyglycine + 2 monodehydro-L-ascorbate radical + H2O. It carries out the reaction N-(9Z-octadecenoyl)-(2S)-hydroxyglycine = (9Z)-octadecenamide + glyoxylate. The catalysed reaction is N-tetradecanoylglycine + 2 L-ascorbate + O2 = N-tetradecanoyl-(2S)-hydroxyglycine + 2 monodehydro-L-ascorbate radical + H2O. It catalyses the reaction N-tetradecanoyl-(2S)-hydroxyglycine = tetradecamide + glyoxylate. The enzyme catalyses N-decanoylglycine + 2 L-ascorbate + O2 = N-decanoyl-(2S)-hydroxyglycine + 2 monodehydro-L-ascorbate radical + H2O. It carries out the reaction N-decanoyl-(2S)-hydroxyglycine = decanamide + glyoxylate. The catalysed reaction is N-octanoylglycine + 2 L-ascorbate + O2 = N-octanoyl-(2S)-hydroxyglycine + 2 monodehydro-L-ascorbate radical + H2O. It catalyses the reaction N-octanoyl-(2S)-hydroxyglycine = octanamide + glyoxylate. With respect to regulation, PAM activity is inhibited by EDTA, phenylglyoxal and diethyl pyrocarbonate. PAL activity is stimulated by cadmium and inhibited by mercury. In terms of biological role, bifunctional enzyme that catalyzes amidation of the C-terminus of proteins. Alpha-amidation is present at the C-terminus of many endocrine hormones and neuropeptides and is required for their activity. C-terminal amidation also takes place in response to protein fragmentation triggered by oxidative stress, promoting degradation of amidated protein fragments by the proteasome. Alpha-amidation involves two sequential reactions, both of which are catalyzed by separate catalytic domains of the enzyme. The first step, catalyzed by peptidyl alpha-hydroxylating monooxygenase (PHM) domain, is the copper-, ascorbate-, and O2- dependent stereospecific hydroxylation (with S stereochemistry) at the alpha-carbon (C-alpha) of the C-terminal glycine of the peptidylglycine substrate. The second step, catalyzed by the peptidylglycine amidoglycolate lyase (PAL) domain, is the zinc-dependent cleavage of the N-C-alpha bond, producing the alpha-amidated peptide and glyoxylate. Similarly, catalyzes the two-step conversion of an N-fatty acylglycine to a primary fatty acid amide and glyoxylate. This Mus musculus (Mouse) protein is Peptidyl-glycine alpha-amidating monooxygenase.